The primary structure comprises 406 residues: Cysteine desulfurase (406 aa).

Lysine 226 is modified (N6-(pyridoxal phosphate)lysine). Cysteine 364 functions as the Cysteine persulfide intermediate in the catalytic mechanism.

The protein belongs to the class-V pyridoxal-phosphate-dependent aminotransferase family. Csd subfamily. In terms of assembly, homodimer. Interacts with SufE and the SufBCD complex composed of SufB, SufC and SufD. The interaction with SufE is required to mediate the direct transfer of the sulfur atom from the S-sulfanylcysteine. Pyridoxal 5'-phosphate serves as cofactor.

The protein localises to the cytoplasm. The enzyme catalyses (sulfur carrier)-H + L-cysteine = (sulfur carrier)-SH + L-alanine. It catalyses the reaction L-selenocysteine + AH2 = hydrogenselenide + L-alanine + A + H(+). It participates in cofactor biosynthesis; iron-sulfur cluster biosynthesis. Its function is as follows. Cysteine desulfurases mobilize the sulfur from L-cysteine to yield L-alanine, an essential step in sulfur metabolism for biosynthesis of a variety of sulfur-containing biomolecules. Component of the suf operon, which is activated and required under specific conditions such as oxidative stress and iron limitation. Acts as a potent selenocysteine lyase in vitro, that mobilizes selenium from L-selenocysteine. Selenocysteine lyase activity is however unsure in vivo. The chain is Cysteine desulfurase from Shigella sonnei (strain Ss046).